The sequence spans 644 residues: Exoribonuclease 2 (644 aa).

An RNB domain is found at 189–516 (REDLTSLDFV…NHRLLKAVIK (328 aa)). Residues 561–643 (GTRFAAEIVD…ETRSIIARPV (83 aa)) form the S1 motif domain.

It belongs to the RNR ribonuclease family. RNase II subfamily.

Its subcellular location is the cytoplasm. It carries out the reaction Exonucleolytic cleavage in the 3'- to 5'-direction to yield nucleoside 5'-phosphates.. Functionally, involved in mRNA degradation. Hydrolyzes single-stranded polyribonucleotides processively in the 3' to 5' direction. The polypeptide is Exoribonuclease 2 (Shigella flexneri).